A 395-amino-acid polypeptide reads, in one-letter code: GPI-anchor transamidase (395 aa).

The signal sequence occupies residues 1-27 (MAVTDSLSRAASTLAAVLLLSFGSVAA). Over 28 to 368 (SHIEDQAEQF…PKLKDWHPPG (341 aa)) the chain is Lumenal. Positions 79, 82, 118, and 120 each coordinate Ca(2+). His-164 serves as the catalytic Proton donor. Cys-206 (nucleophile; acyl-thioester intermediate) is an active-site residue. Cys-206, Ser-232, and Ser-234 together coordinate a protein. Residues 231-236 (DSLSHQ) form an autoinhibitory loop region. A disulfide bridge connects residues Cys-275 and Cys-280. A helical membrane pass occupies residues 369–385 (GFILGLWALIIMVFFKT). The Cytoplasmic segment spans residues 386–395 (YGIKHMKFIF).

The protein belongs to the peptidase C13 family. As to quaternary structure, heteropentamer. Part of the GPI-anchor transamidase complex, consisting of PIGK, PIGT, PIGS, PIGU and GAA1. Interacts with GPAA1. Interacts with PIGT; this interaction, via a disulfide link, stabilizes the expression of GAA1 and PIGK and links them to PIGS. Post-translationally, the disulfide bond between PIGK/GPI8 and PIGT is important for normal enzyme activity.

The protein localises to the endoplasmic reticulum membrane. It functions in the pathway glycolipid biosynthesis; glycosylphosphatidylinositol-anchor biosynthesis. In the absence of proproteins substrates, exists in an inactive state with a disrupted catalytic site by an autoinhibitory loop. The binding of proprotein substrates, particularly the CSP region, to GPI-T triggers concerted conformational changes that alleviate the inhibition by the autoinhibitory loop. Meanwhile, proprotein residues near the omega- site induce the formation of a catalytic cleft for catalysis, following which the products are released and GPI-T reverts to the inactive state. Functionally, catalytic subunit of the glycosylphosphatidylinositol-anchor (GPI-anchor) transamidase (GPI-T) complex that catalyzes the formation of the linkage between a proprotein and a GPI-anchor and participates in GPI anchored protein biosynthesis. Recognizes diverse proproteins at a C-terminal signal peptide (CSP) region that lacks consensus sequence and replaces it with a GPI-anchor via a transamidation reaction. Transamidation catalysis reaction follows a two-phase mechanism. In the acyl-enzyme phase, the carbonyl group of the proproteins's omega-site undergoes a nucleophilic attack forming an enzyme-substrate thioester bond. Followed by a general acid catalysis that allows CSP releasing, regenerating the carbonyl, and forming the acyl-enzyme intermediate. In the GPI-anchor attachment phase, the amino group of the GPI-anchor's ethanolamine phosphate, the one on third mannose (EtNP3), mediates a nucleophilic attack on the carbonyl of the acyl-enzyme intermediate, replacing the CSP, allowing GPI-anchor attachment to the omega-residue, therefore forming the product and freeing the enzyme. The polypeptide is GPI-anchor transamidase (Pongo abelii (Sumatran orangutan)).